Reading from the N-terminus, the 863-residue chain is Protein ARG5,6, mitochondrial (863 aa).

The transit peptide at 1 to 65 (MPSASLLVST…RYVSSTNGFS (65 aa)) directs the protein to the mitochondrion. The region spanning 353-505 (KLVKRSSIGE…NFVKSCDTAS (153 aa)) is the N-acetyltransferase domain. Residue S359 is modified to Phosphoserine. C675 is an active-site residue.

This sequence in the N-terminal section; belongs to the acetylglutamate kinase family. In the C-terminal section; belongs to the NAGSA dehydrogenase family. Post-translationally, the protein precursor is cleaved into the two biologically active enzymes, the kinase and the reductase.

The protein localises to the mitochondrion. It carries out the reaction N-acetyl-L-glutamate 5-semialdehyde + phosphate + NADP(+) = N-acetyl-L-glutamyl 5-phosphate + NADPH + H(+). The enzyme catalyses N-acetyl-L-glutamate + ATP = N-acetyl-L-glutamyl 5-phosphate + ADP. The protein operates within amino-acid biosynthesis; L-arginine biosynthesis; N(2)-acetyl-L-ornithine from L-glutamate: step 2/4. It functions in the pathway amino-acid biosynthesis; L-arginine biosynthesis; N(2)-acetyl-L-ornithine from L-glutamate: step 3/4. Its activity is regulated as follows. The kinase activity is inhibited by arginine. This is Protein ARG5,6, mitochondrial (ARG5,6) from Saccharomyces cerevisiae (strain ATCC 204508 / S288c) (Baker's yeast).